The chain runs to 514 residues: Maturase K (514 aa).

The protein belongs to the intron maturase 2 family. MatK subfamily.

It is found in the plastid. Its subcellular location is the chloroplast. Usually encoded in the trnK tRNA gene intron. Probably assists in splicing its own and other chloroplast group II introns. In Drosophyllum lusitanicum (Portuguese sundew), this protein is Maturase K.